A 243-amino-acid polypeptide reads, in one-letter code: Adenine phosphoribosyltransferase 1, chloroplastic (243 aa).

The transit peptide at 1–52 (MQTIIISPLVSHRLCLARAVPCNRLLNNHHRAPPSIRLSNHRSTTSLRLFSS) directs the protein to the chloroplast. Residue Q2 is modified to N-acetylalanine.

It belongs to the purine/pyrimidine phosphoribosyltransferase family. As to quaternary structure, homodimer.

The protein resides in the plastid. It localises to the chloroplast. It is found in the cytoplasm. The catalysed reaction is AMP + diphosphate = 5-phospho-alpha-D-ribose 1-diphosphate + adenine. It participates in purine metabolism; AMP biosynthesis via salvage pathway; AMP from adenine: step 1/1. Catalyzes a salvage reaction resulting in the formation of AMP, that is energically less costly than de novo synthesis. Contributes primarily to the recycling of adenine into adenylate nucleotides, but is also involved in the inactivation of cytokinins by phosphoribosylation. Catalyzes the conversion of cytokinins from free bases (active form) to the corresponding nucleotides (inactive form). The protein is Adenine phosphoribosyltransferase 1, chloroplastic (APT1) of Arabidopsis thaliana (Mouse-ear cress).